A 420-amino-acid polypeptide reads, in one-letter code: Histidine--tRNA ligase (420 aa).

This sequence belongs to the class-II aminoacyl-tRNA synthetase family. As to quaternary structure, homodimer.

The protein resides in the cytoplasm. The catalysed reaction is tRNA(His) + L-histidine + ATP = L-histidyl-tRNA(His) + AMP + diphosphate + H(+). The sequence is that of Histidine--tRNA ligase (hisS) from Thermotoga maritima (strain ATCC 43589 / DSM 3109 / JCM 10099 / NBRC 100826 / MSB8).